The sequence spans 2110 residues: Tenascin (2110 aa).

A signal peptide spans 1–22; sequence MGAVTWLLPGIFLALFALTPEG. Asparagine 38 carries an N-linked (GlcNAc...) asparagine glycan. A phosphoserine mark is found at serine 65, serine 70, and serine 72. A disordered region spans residues 69 to 91; it reads ESASGEKDLTPTPESSGSFQEHT. Residue serine 72 is glycosylated (O-linked (Xyl...) (chondroitin sulfate) serine). The span at 80 to 89 shows a compositional bias: polar residues; the sequence is TPESSGSFQE. Residues 118-142 are a coiled coil; the sequence is DVKELLSRLEELELLVSSLREQCTM. 2 N-linked (GlcNAc...) asparagine glycosylation sites follow: asparagine 166 and asparagine 184. Residues 174–185 enclose the EGF-like 1; incomplete domain; the sequence is CVCEPGWKGPNC. EGF-like domains are found at residues 186–216, 217–247, 248–279, 280–310, 311–341, 342–372, 373–403, 404–434, 435–465, 466–496, 497–527, 528–558, 559–589, and 590–621; these read SEPDCPGNCNLRGQCLDGQCICDEGFTGEDC, SQLACPNDCNDQGRCVNGVCVCFEGYAGPDC, GLEVCPVPCSEEHGMCVDGRCVCKDGFAGEDC, NEPLCLNNCYNRGRCVENECVCDEGFTGEDC, SELICPNDCFDRGRCINGTCYCEEGFTGEDC, GELTCPNDCQGRGQCEEGQCVCNEGFAGADC, SEKRCPADCHHRGRCLNGQCECDDGFTGADC, GDLQCPNGCSGHGRCVNGQCVCDEGYTGEDC, SQRRCPNDCHNRGLCVQGKCICEQGFKGFDC, SEMSCPNDCHQHGRCVNGMCICDDDYTGEDC, RDRRCPRDCSQRGRCVDGQCICEDGFTGPDC, AELSCPSDCHGHGRCVNGQCICHEGFTGKDC, KEQRCPSDCHGQGRCEDGQCICHEGFTGLDC, and GQRSCPNDCSNQGQCVSGRCICNEGYTGIDCS. 42 disulfide bridges follow: cysteine 190-cysteine 200, cysteine 194-cysteine 205, cysteine 207-cysteine 216, cysteine 221-cysteine 231, cysteine 225-cysteine 236, cysteine 238-cysteine 247, cysteine 252-cysteine 263, cysteine 256-cysteine 268, cysteine 270-cysteine 279, cysteine 284-cysteine 294, cysteine 288-cysteine 299, cysteine 301-cysteine 310, cysteine 315-cysteine 325, cysteine 319-cysteine 330, cysteine 332-cysteine 341, cysteine 346-cysteine 356, cysteine 350-cysteine 361, cysteine 363-cysteine 372, cysteine 377-cysteine 387, cysteine 381-cysteine 392, cysteine 394-cysteine 403, cysteine 408-cysteine 418, cysteine 412-cysteine 423, cysteine 425-cysteine 434, cysteine 439-cysteine 449, cysteine 443-cysteine 454, cysteine 456-cysteine 465, cysteine 470-cysteine 480, cysteine 474-cysteine 485, cysteine 487-cysteine 496, cysteine 501-cysteine 511, cysteine 505-cysteine 516, cysteine 518-cysteine 527, cysteine 532-cysteine 542, cysteine 536-cysteine 547, cysteine 549-cysteine 558, cysteine 563-cysteine 573, cysteine 567-cysteine 578, cysteine 580-cysteine 589, cysteine 594-cysteine 604, cysteine 598-cysteine 609, and cysteine 611-cysteine 620. An N-linked (GlcNAc...) asparagine glycan is attached at asparagine 327. Fibronectin type-III domains follow at residues 625-715, 716-804, 805-894, 895-988, 989-1077, 1078-1165, 1167-1259, 1260-1348, 1349-1440, 1442-1530, 1531-1620, 1621-1710, 1711-1797, and 1798-1886; these read PPKD…LPAP, EGLK…TRLD, APSH…TGLD, APRN…IDAP, KDLR…VPSL, ENLT…TGTT, NLGE…LPQL, GGLS…AREP, EIGN…ALPL, ENLT…EAEP, EVDN…TAMG, SPKE…ALDG, PSGL…TDLD, and SPRE…IGLL. Asparagine 788 is a glycosylation site (N-linked (GlcNAc...) asparagine). Threonine 905 bears the Phosphothreonine mark. Asparagine 1018, asparagine 1079, asparagine 1093, asparagine 1119, asparagine 1184, asparagine 1210, asparagine 1275, asparagine 1301, asparagine 1354, asparagine 1364, asparagine 1394, and asparagine 1443 each carry an N-linked (GlcNAc...) asparagine glycan. The N-linked (GlcNAc...) asparagine glycan is linked to asparagine 1718. The region spanning 1884 to 2099 is the Fibrinogen C-terminal domain; it reads GLLYPFPRDC…FAEMKLRPSN (216 aa). Residues asparagine 1969 and asparagine 2071 are each glycosylated (N-linked (GlcNAc...) asparagine).

Belongs to the tenascin family. Homohexamer; disulfide-linked. A homotrimer may be formed in the triple coiled-coil region and may be stabilized by disulfide rings at both ends. Two of such half-hexabrachions may be disulfide linked within the central globule. Interacts with CSPG4. Interacts (via the 3rd fibronectin type-III domain) with integrin ITGA9:ITGB1. In terms of processing, N-glycosylated. Expressed in the corneal limbus, the periosteum and the rib molecular layer of the cerebellum, the matrix of kidney tubules, blood vessels, stomach and intestine (at protein level). In terms of tissue distribution, weakly expressed in the brain. As to expression, highly expressed in the thymus and moderately expressed in the brain.

It localises to the secreted. Its subcellular location is the extracellular space. The protein resides in the extracellular matrix. Extracellular matrix protein implicated in guidance of migrating neurons as well as axons during development, synaptic plasticity as well as neuronal regeneration. Promotes neurite outgrowth when provided to neurons in culture. May play a role in supporting the growth of epithelial tumors. Ligand for integrins ITGA8:ITGB1, ITGA9:ITGB1, ITGAV:ITGB3 and ITGAV:ITGB6. In tumors, stimulates angiogenesis by elongation, migration and sprouting of endothelial cells. This is Tenascin from Mus musculus (Mouse).